The chain runs to 264 residues: Thymidylate synthase (264 aa).

Position 21 (arginine 21) interacts with dUMP. A (6R)-5,10-methylene-5,6,7,8-tetrahydrofolate-binding site is contributed by histidine 51. Position 126–127 (126–127) interacts with dUMP; it reads RR. Residue cysteine 146 is the Nucleophile of the active site. DUMP-binding positions include 166 to 169, asparagine 177, and 207 to 209; these read RSCD and HLY. Aspartate 169 provides a ligand contact to (6R)-5,10-methylene-5,6,7,8-tetrahydrofolate. Alanine 263 serves as a coordination point for (6R)-5,10-methylene-5,6,7,8-tetrahydrofolate.

Belongs to the thymidylate synthase family. Bacterial-type ThyA subfamily. In terms of assembly, homodimer.

It localises to the cytoplasm. It carries out the reaction dUMP + (6R)-5,10-methylene-5,6,7,8-tetrahydrofolate = 7,8-dihydrofolate + dTMP. It participates in pyrimidine metabolism; dTTP biosynthesis. In terms of biological role, catalyzes the reductive methylation of 2'-deoxyuridine-5'-monophosphate (dUMP) to 2'-deoxythymidine-5'-monophosphate (dTMP) while utilizing 5,10-methylenetetrahydrofolate (mTHF) as the methyl donor and reductant in the reaction, yielding dihydrofolate (DHF) as a by-product. This enzymatic reaction provides an intracellular de novo source of dTMP, an essential precursor for DNA biosynthesis. The polypeptide is Thymidylate synthase (Enterobacter sp. (strain 638)).